The primary structure comprises 588 residues: Interferon-activable protein 208 (588 aa).

Positions 5 to 92 (MVNYYKQIVL…VDILRKEMEK (88 aa)) constitute a Pyrin domain. 2 disordered regions span residues 157–183 (ATST…SLQT) and 469–526 (EMQN…RRVN). Composition is skewed to polar residues over residues 172–183 (RFPTTASSSLQT) and 470–487 (MQNP…QPRL).

Belongs to the HIN-200 family.

In Mus musculus (Mouse), this protein is Interferon-activable protein 208.